Reading from the N-terminus, the 99-residue chain is Keratinocyte differentiation-associated protein (99 aa).

A signal peptide spans 1 to 22; sequence MKIPVLPAVVLLSLLVLHSAQG.

As to expression, highly expressed in skin and detected at lower levels in thymus. In skin, found exclusively in lamellar granules of granular keratinocytes and in the intracellular space of the stratum corneum. Also highly expressed in oral mucosa, tongue, esophagus, and stomach, and at much lower levels in bladder and uterus. Not detected in gastrointestinal mucosa.

The protein resides in the secreted. In terms of biological role, may act as a soluble regulator of keratinocyte differentiation. May play an important role in embryonic skin morphogenesis. This chain is Keratinocyte differentiation-associated protein (KRTDAP), found in Homo sapiens (Human).